The sequence spans 568 residues: Autophagy-related protein 17 (568 aa).

Disordered stretches follow at residues 1–59 and 522–568; these read MASF…DSSE and SYEM…ERPF. The span at 522–546 shows a compositional bias: basic and acidic residues; it reads SYEMEAHGEPENEGKVETAYERETE.

The protein belongs to the ATG17 family.

It localises to the cytoplasm. The protein resides in the preautophagosomal structure membrane. Functionally, autophagy-specific protein that functions in response to autophagy-inducing signals as a scaffold to recruit other ATG proteins to organize pre-autophagosomal structure (PAS) formation. Modulates the timing and magnitude of the autophagy response, such as the size of the sequestering vesicles. Plays particularly a role in pexophagy and nucleophagy. This chain is Autophagy-related protein 17 (apg-9), found in Neurospora crassa (strain ATCC 24698 / 74-OR23-1A / CBS 708.71 / DSM 1257 / FGSC 987).